We begin with the raw amino-acid sequence, 565 residues long: Phospholipase B-like protein C (565 aa).

An N-terminal signal peptide occupies residues 1 to 21 (MNKIIILISLFLNFLFGYVVC). N53, N84, N118, N200, N201, N211, N266, N302, N406, and N485 each carry an N-linked (GlcNAc...) asparagine glycan.

The protein belongs to the phospholipase B-like family.

Its subcellular location is the secreted. Functionally, probable phospholipase. The protein is Phospholipase B-like protein C (plbC) of Dictyostelium discoideum (Social amoeba).